Reading from the N-terminus, the 63-residue chain is Sarcotoxin-1A (63 aa).

The signal sequence occupies residues 1-23 (MNFQNIFIFVALILAVFAGQSQA). Position 62 is an arginine amide (Arg-62).

This sequence belongs to the cecropin family.

Its subcellular location is the secreted. Sarcotoxins, which are potent bactericidal proteins, are produced in response to injury. They are cytotoxic to both Gram-positive and Gram-negative bacteria. The sequence is that of Sarcotoxin-1A from Sarcophaga peregrina (Flesh fly).